The chain runs to 468 residues: tRNA modification GTPase MnmE (468 aa).

Positions 29, 97, and 136 each coordinate (6S)-5-formyl-5,6,7,8-tetrahydrofolate. Positions 232–390 (GFELAIVGRP…VVAHIVARME (159 aa)) constitute a TrmE-type G domain. Position 242 (asparagine 242) interacts with K(+). Residues 242–247 (NVGKSS), 261–267 (TDLAGTT), and 286–289 (DTAG) each bind GTP. Residue serine 246 participates in Mg(2+) binding. Threonine 261, leucine 263, and threonine 266 together coordinate K(+). A Mg(2+)-binding site is contributed by threonine 267. (6S)-5-formyl-5,6,7,8-tetrahydrofolate is bound at residue lysine 468.

The protein belongs to the TRAFAC class TrmE-Era-EngA-EngB-Septin-like GTPase superfamily. TrmE GTPase family. As to quaternary structure, homodimer. Heterotetramer of two MnmE and two MnmG subunits. It depends on K(+) as a cofactor.

The protein resides in the cytoplasm. Exhibits a very high intrinsic GTPase hydrolysis rate. Involved in the addition of a carboxymethylaminomethyl (cmnm) group at the wobble position (U34) of certain tRNAs, forming tRNA-cmnm(5)s(2)U34. The polypeptide is tRNA modification GTPase MnmE (Magnetococcus marinus (strain ATCC BAA-1437 / JCM 17883 / MC-1)).